We begin with the raw amino-acid sequence, 110 residues long: UPF0060 membrane protein PFL_4337 (110 aa).

Transmembrane regions (helical) follow at residues 5–25 (LWFF…WMWL), 31–51 (ALWV…LTKV), 59–79 (AYAA…AVVE), and 84–104 (LGSD…ILFG).

This sequence belongs to the UPF0060 family.

Its subcellular location is the cell inner membrane. The polypeptide is UPF0060 membrane protein PFL_4337 (Pseudomonas fluorescens (strain ATCC BAA-477 / NRRL B-23932 / Pf-5)).